The chain runs to 411 residues: MQAEIIFTGTELLVGEVLNSHAQYLGRRLTEMGIEVIQHTTVGDYWGRMGLVLLQALERADLIFITGGLGPTIDDLTKETVAEVLELDMKLDEASLEAIREHFAKRGMEMPDNNTKQAYFPEGARVLPNTRGTAPGAIVEVDKKAIIILPGPPWEMETMFDNSVVSYLNSLPHRGTLCTSKTFRLTGIGESTVQELIDDLCGMGNPEISFLVNPGVVEVRVTGQGATLEQATGLVQNLSEQVRKRLFQYIFAEDDEKIEQVVGQMLIDAGLTIAVAESCTGGLIEARLSDIPGASRYLVGGVVAYTKQVKERILGVPADTLAQFGAVSRQTAIAMAEGVRRELGSSIGLAVTGVAGPTSSEGKPVGLVYIALSSPTGVCYREYRFPGERKAIRSGTVNAALKMAKHFLQGK.

This sequence belongs to the CinA family.

The polypeptide is Putative competence-damage inducible protein (Desulforamulus reducens (strain ATCC BAA-1160 / DSM 100696 / MI-1) (Desulfotomaculum reducens)).